The chain runs to 416 residues: MNKQSWLLNLSLLKTHPAFRAVFLARFISIVSLGLLGVAVPVQIQIMTHSTWQVGLSVTLTGGAMFVGLMVGGVLADRYERKKVILLARGTCGIGFIGLCLNALLPEPSLLAIYLLGLWDGFFASLGVTALLAATPALVGRENLMQAGAITMLTVRLGSVISPMIGGLLLATGGVAWNYGLAAAGTFITLLPLLSLPALPPPPQPREHPLKSLLAGFRFLLASPLVGGIALLGGLLTMASAVRVLYPALADNWQMSAAQIGFLYAAIPLGAAIGALTSGKLAHSVRPGLLMLLSTLGAFLAIGLFGLMPMWILGVVCLALFGWLSAVSSLLQYTMLQTQTPEAMLGRINGLWTAQNVTGDAIGAALLGGLGAMMTPVASASASGFGLLIIGVLLLLVLVELRRFRQTPPQVTASDS.

At 1–21 (MNKQSWLLNLSLLKTHPAFRA) the chain is on the cytoplasmic side. A helical membrane pass occupies residues 22-42 (VFLARFISIVSLGLLGVAVPV). The Periplasmic portion of the chain corresponds to 43–55 (QIQIMTHSTWQVG). Residues 56–76 (LSVTLTGGAMFVGLMVGGVLA) form a helical membrane-spanning segment. Residues 77-83 (DRYERKK) lie on the Cytoplasmic side of the membrane. Residues 84–104 (VILLARGTCGIGFIGLCLNAL) traverse the membrane as a helical segment. Topologically, residues 105 to 109 (LPEPS) are periplasmic. Residues 110-130 (LLAIYLLGLWDGFFASLGVTA) traverse the membrane as a helical segment. The Cytoplasmic portion of the chain corresponds to 131–156 (LLAATPALVGRENLMQAGAITMLTVR). Residues 157-177 (LGSVISPMIGGLLLATGGVAW) form a helical membrane-spanning segment. A topological domain (periplasmic) is located at residue Asn178. Residues 179–199 (YGLAAAGTFITLLPLLSLPAL) form a helical membrane-spanning segment. At 200–218 (PPPPQPREHPLKSLLAGFR) the chain is on the cytoplasmic side. Residues 219-239 (FLLASPLVGGIALLGGLLTMA) traverse the membrane as a helical segment. At 240–256 (SAVRVLYPALADNWQMS) the chain is on the periplasmic side. Residues 257–277 (AAQIGFLYAAIPLGAAIGALT) traverse the membrane as a helical segment. At 278–287 (SGKLAHSVRP) the chain is on the cytoplasmic side. The chain crosses the membrane as a helical span at residues 288-307 (GLLMLLSTLGAFLAIGLFGL). Topologically, residues 308 to 313 (MPMWIL) are periplasmic. Residues 314 to 336 (GVVCLALFGWLSAVSSLLQYTML) traverse the membrane as a helical segment. The Cytoplasmic segment spans residues 337–356 (QTQTPEAMLGRINGLWTAQN). Residues 357-377 (VTGDAIGAALLGGLGAMMTPV) form a helical membrane-spanning segment. Position 378 (Ala378) is a topological domain, periplasmic. The helical transmembrane segment at 379-399 (SASASGFGLLIIGVLLLLVLV) threads the bilayer. Topologically, residues 400–416 (ELRRFRQTPPQVTASDS) are cytoplasmic.

The protein belongs to the major facilitator superfamily. EntS (TC 2.A.1.38) family.

The protein resides in the cell inner membrane. In terms of biological role, component of an export pathway for enterobactin. The protein is Enterobactin exporter EntS of Escherichia coli O127:H6 (strain E2348/69 / EPEC).